The chain runs to 411 residues: MSLEAIVFDRSELENVSVKVLDQLLLPYTTKYVPIHTIDDGYSVIKSMQVRGAPAIAIVGSLSVLTEVQLIKHNPTSDVATLYSLVNWESTKTVLNKRLDFLLSSRPTAVNLSNSLVEIKNILKSSSDLKAFDGSLYNYVCELIDEDLANNMKMGDNGAKYLIDVLQKDGFKDEFAVLTICNTGSLATSGYGTALGVIRSLWKDSLAKTDKADSGLDNEKCPRMGHVFPLETRPYNQGSRLTAYELVYDKIPSTLITDSSIAYRIRTSPIPIKAAFVGADRIVRNGDTANKIGTLQLAVICKQFGIKFFVVAPKTTIDNVTETGDDIIVEERNPEEFKVVTGTVINPENGSLILNESGEPITGKVGIAPLEINVWNPAFDITPHELIDGIITEEGVFTKNSSGEFQLESLF.

S2 is modified (N-acetylserine). Catalysis depends on D280, which acts as the Proton donor. A Phosphoserine modification is found at S351.

This sequence belongs to the eIF-2B alpha/beta/delta subunits family. MtnA subfamily. Homodimer.

It localises to the cytoplasm. The protein resides in the nucleus. It catalyses the reaction 5-(methylsulfanyl)-alpha-D-ribose 1-phosphate = 5-(methylsulfanyl)-D-ribulose 1-phosphate. Its pathway is amino-acid biosynthesis; L-methionine biosynthesis via salvage pathway; L-methionine from S-methyl-5-thio-alpha-D-ribose 1-phosphate: step 1/6. In terms of biological role, catalyzes the interconversion of methylthioribose-1-phosphate (MTR-1-P) into methylthioribulose-1-phosphate (MTRu-1-P). This chain is Methylthioribose-1-phosphate isomerase, found in Saccharomyces cerevisiae (strain JAY291) (Baker's yeast).